Consider the following 187-residue polypeptide: Elongation factor P (187 aa).

This sequence belongs to the elongation factor P family.

Its subcellular location is the cytoplasm. The protein operates within protein biosynthesis; polypeptide chain elongation. Its function is as follows. Involved in peptide bond synthesis. Stimulates efficient translation and peptide-bond synthesis on native or reconstituted 70S ribosomes in vitro. Probably functions indirectly by altering the affinity of the ribosome for aminoacyl-tRNA, thus increasing their reactivity as acceptors for peptidyl transferase. The polypeptide is Elongation factor P (Ruegeria pomeroyi (strain ATCC 700808 / DSM 15171 / DSS-3) (Silicibacter pomeroyi)).